A 671-amino-acid chain; its full sequence is Polyadenylate-binding protein 8 (671 aa).

4 consecutive RRM domains span residues 45–123 (TSLY…YSVR), 133–210 (GNIF…PFVH), 224–301 (TNVY…KAQK), and 327–404 (SNLY…LAQR). The tract at residues 467-526 (LVPGMRPGGSPMPNFFMPMMQQGQQQQQQQQQQQRPGGGRRGALPQPQQPSPMMQQQMHP) is disordered. Composition is skewed to low complexity over residues 483–501 (MPMM…QQQR) and 508–525 (GALP…QQMH). The 78-residue stretch at 573–650 (PIVALATRLA…AMDVLRSVAQ (78 aa)) folds into the PABC domain.

Belongs to the polyadenylate-binding protein type-1 family. In terms of assembly, interacts with ERD15/CID1. Interacts with Turnip mosaic virus (TuMV) VPg-Pro and RNA-dependent RNA polymerase (RdRp). As to expression, expressed predominantly in immature flowers.

The protein resides in the cytoplasm. Its subcellular location is the nucleus. Its function is as follows. Binds the poly(A) tail of mRNA. Appears to be an important mediator of the multiple roles of the poly(A) tail in mRNA biogenesis, stability and translation. During infection with potyvirus TuMV, acts as a potential integral component of the viral replicase complex that could play an important role in the regulation of potyviral RNA-dependent RNA polymerase (RdRp). In Arabidopsis thaliana (Mouse-ear cress), this protein is Polyadenylate-binding protein 8 (PAB8).